The sequence spans 117 residues: MKLCAVIIASLLVCVAVASSSDNQKEFAQEKEMTREETQSLGEHEKDDEVTGSEERSCIEEWKTCENDCECCGMSTLCAASWVDGHQIKLCRNVGGKLKKVLHFIQKSVSKIKSCKK.

A signal peptide spans 1–20; that stretch reads MKLCAVIIASLLVCVAVASS. A disordered region spans residues 20–55; the sequence is SSDNQKEFAQEKEMTREETQSLGEHEKDDEVTGSEE. A propeptide spanning residues 21–56 is cleaved from the precursor; that stretch reads SDNQKEFAQEKEMTREETQSLGEHEKDDEVTGSEER. Residues 23-55 are compositionally biased toward basic and acidic residues; sequence NQKEFAQEKEMTREETQSLGEHEKDDEVTGSEE. Cystine bridges form between C58–C72, C65–C78, C69–C115, and C71–C91.

It belongs to the neurotoxin 03 (Tx2) family. 02 subfamily. HNTX-XV sub-subfamily. As to expression, expressed by the venom gland.

It is found in the secreted. In terms of biological role, putative ion channel inhibitor. The polypeptide is Hainantoxin-XV-2 (Cyriopagopus hainanus (Chinese bird spider)).